Reading from the N-terminus, the 22-residue chain is Unknown endosperm protein L (22 aa).

Residues 1-11 (MRHSNKIRDEE) show a composition bias toward basic and acidic residues. Positions 1–22 (MRHSNKIRDEEMVNNTRLNXXA) are disordered. Residues 13–22 (VNNTRLNXXA) are compositionally biased toward polar residues.

In terms of processing, the N-terminus is blocked.

The protein is Unknown endosperm protein L of Hordeum vulgare (Barley).